A 357-amino-acid chain; its full sequence is Glutamine synthetase (357 aa).

One can recognise a GS beta-grasp domain in the interval V25 to G104. The 247-residue stretch at Y111–L357 folds into the GS catalytic domain.

The protein belongs to the glutamine synthetase family. Homooctamer.

The protein resides in the cytoplasm. The enzyme catalyses L-glutamate + NH4(+) + ATP = L-glutamine + ADP + phosphate + H(+). The sequence is that of Glutamine synthetase (glnA) from Emericella nidulans (strain FGSC A4 / ATCC 38163 / CBS 112.46 / NRRL 194 / M139) (Aspergillus nidulans).